Consider the following 956-residue polypeptide: Replication factor C subunit 1 (956 aa).

Composition is skewed to basic and acidic residues over residues 1 to 15 (MSDI…HEKG) and 50 to 74 (TADR…KEVE). 2 disordered regions span residues 1 to 206 (MSDI…TPDC) and 286 to 332 (KKSL…AKGK). A compositionally biased stretch (gly residues) spans 158–183 (RGRGGRAAPGASTGGRGRGGGRGGFM). 2 stretches are compositionally biased toward basic and acidic residues: residues 186 to 200 (GERK…KEVP) and 288 to 298 (SLPERSNKGTE). The BRCT domain maps to 202 to 292 (GTPDCLAGLT…KPVKKSLPER (91 aa)). 399-406 (SGTPGIGK) contacts ATP. Residues 858 to 956 (LEPTVDSLRD…GRGSGAKRKR (99 aa)) form a disordered region. Acidic residues predominate over residues 866–892 (RDEDGEPLADNEEGNGSDAEEDSEEAT). The segment covering 916 to 925 (KGAGSSGSRK) has biased composition (low complexity).

Belongs to the activator 1 large subunit family. In terms of assembly, heterotetramer of subunits RFC2, RFC3, RFC4 and RFC5 that can form a complex with RFC1. As to expression, expressed at high levels in flowers and siliques, and at lower levels in roots, stems and leaves.

The protein resides in the nucleus. In terms of biological role, plays a role as mediator of transcriptional gene silencing (TGS), DNA replication, DNA repair, hypersensitive response (HR) and telomere length regulation. Is required in meiosis for DNA double-strand break (DSB) repair during meiotic homologous recombination. May participate in the RAD51-mediated recombination intermediate repair process. Is important for lagging strand synthesis. Promotes meiotic recombination via a specific pathway for crossovers (COs) that involves the formation of double Holliday Junction (dHJ) intermediates. This is Replication factor C subunit 1 (RFC1) from Arabidopsis thaliana (Mouse-ear cress).